We begin with the raw amino-acid sequence, 135 residues long: Glutaredoxin-C4 (135 aa).

Positions 32–132 (ADFVKKTISS…KLLGVSGNKE (101 aa)) constitute a Glutaredoxin domain. Cysteine 52 and cysteine 55 are oxidised to a cystine.

It belongs to the glutaredoxin family. CPYC subfamily.

The protein localises to the cytoplasm. In terms of biological role, has a glutathione-disulfide oxidoreductase activity in the presence of NADPH and glutathione reductase. Reduces low molecular weight disulfides and proteins. This chain is Glutaredoxin-C4 (GRXC4), found in Arabidopsis thaliana (Mouse-ear cress).